Reading from the N-terminus, the 72-residue chain is Disintegrin cotiarin (72 aa).

Positions 1–72 (EAGEECDCGA…SADCPRNRFH (72 aa)) constitute a Disintegrin domain. 6 disulfide bridges follow: C6–C21, C8–C16, C15–C38, C29–C35, C34–C59, and C47–C66. The Cell attachment site signature appears at 51–53 (RGD). The disordered stretch occupies residues 51-72 (RGDNPDDRCTGQSADCPRNRFH).

The protein belongs to the venom metalloproteinase (M12B) family. P-II subfamily. P-IIa sub-subfamily. As to quaternary structure, monomer. In terms of tissue distribution, expressed by the venom gland.

The protein resides in the secreted. In terms of biological role, inhibits fibrinogen interaction with platelets. Acts by binding to alpha-IIb/beta-3 (ITGA2B/ITGB3) on the platelet surface and inhibits aggregation induced by ADP, thrombin, platelet-activating factor and collagen. In Bothrops cotiara (Cotiara), this protein is Disintegrin cotiarin.